The primary structure comprises 729 residues: Fatty acid oxidation complex subunit alpha (729 aa).

Residues 1–189 form an enoyl-CoA hydratase/isomerase region; that stretch reads MLYQSETLQL…KIGLVDAVVD (189 aa). Asp296 provides a ligand contact to substrate. The segment at 311–729 is 3-hydroxyacyl-CoA dehydrogenase; it reads AAPKLAAVLG…LLDVSTNQPA (419 aa). NAD(+) contacts are provided by residues Met324, Asp343, 400–402, Lys407, and Ser429; that span reads VVE. Residue His450 is the For 3-hydroxyacyl-CoA dehydrogenase activity of the active site. Asn453 is a binding site for NAD(+). Substrate is bound by residues Asn500 and Tyr660.

The protein in the N-terminal section; belongs to the enoyl-CoA hydratase/isomerase family. It in the C-terminal section; belongs to the 3-hydroxyacyl-CoA dehydrogenase family. As to quaternary structure, heterotetramer of two alpha chains (FadB) and two beta chains (FadA).

It catalyses the reaction a (3S)-3-hydroxyacyl-CoA + NAD(+) = a 3-oxoacyl-CoA + NADH + H(+). The catalysed reaction is a (3S)-3-hydroxyacyl-CoA = a (2E)-enoyl-CoA + H2O. It carries out the reaction a 4-saturated-(3S)-3-hydroxyacyl-CoA = a (3E)-enoyl-CoA + H2O. The enzyme catalyses (3S)-3-hydroxybutanoyl-CoA = (3R)-3-hydroxybutanoyl-CoA. It catalyses the reaction a (3Z)-enoyl-CoA = a 4-saturated (2E)-enoyl-CoA. The catalysed reaction is a (3E)-enoyl-CoA = a 4-saturated (2E)-enoyl-CoA. It participates in lipid metabolism; fatty acid beta-oxidation. Functionally, involved in the aerobic and anaerobic degradation of long-chain fatty acids via beta-oxidation cycle. Catalyzes the formation of 3-oxoacyl-CoA from enoyl-CoA via L-3-hydroxyacyl-CoA. It can also use D-3-hydroxyacyl-CoA and cis-3-enoyl-CoA as substrate. This is Fatty acid oxidation complex subunit alpha from Yersinia pseudotuberculosis serotype O:1b (strain IP 31758).